A 455-amino-acid polypeptide reads, in one-letter code: Tyramine receptor Ser-2 (455 aa).

Topologically, residues 1–60 (MFRNYTDSVQEMVLRAIDSIRDSVINASSAVSTTTLPPLDIPMTSMKPPSIIPTVELVLG) are extracellular. Asn-4 and Asn-26 each carry an N-linked (GlcNAc...) asparagine glycan. Residues 61-83 (TITYLVIIAMTVVGNTLVVVAVF) traverse the membrane as a helical segment. Residues 84 to 93 (SYRPLKKVQN) are Cytoplasmic-facing. Residues 94 to 115 (YFLVSLAASDLAVAIFVMPLHV) form a helical membrane-spanning segment. The Extracellular segment spans residues 116–133 (VTFLAGGKWLLGVTVCQF). Cys-131 and Cys-209 are joined by a disulfide. The chain crosses the membrane as a helical span at residues 134–154 (FTTADILLCTSSILNLCAIAL). Residues 155–174 (DRYWAIHNPINYAQKRTTKF) lie on the Cytoplasmic side of the membrane. A helical transmembrane segment spans residues 175 to 197 (VCIVIVIVWILSMLISVPPIIGW). The Extracellular segment spans residues 198–221 (NNWQENMMEDSCGLSTEKAFVVFS). Residues 222-243 (AAGSFFLPLLVMVVVYVKIFIS) traverse the membrane as a helical segment. At 244–370 (ARQRIRTNRG…VAKEKRAAKT (127 aa)) the chain is on the cytoplasmic side. The chain crosses the membrane as a helical span at residues 371–392 (IAVIIFVFSFCWLPFFVAYVIR). Over 393–407 (PFCETCKLHAKVEQA) the chain is Extracellular. Residues 408–428 (FTWLGYINSSLNPFLYGILNL) traverse the membrane as a helical segment. Over 429 to 455 (EFRRAFKKILCPKAVLEQRRRRMSAQP) the chain is Cytoplasmic.

Belongs to the G-protein coupled receptor 1 family. As to expression, the different isoforms are expressed in specific, but overlapping sets of sensory, inter- and motor neurons, including AIY, AIZ and RIA interneurons. They are also expressed in pharyngeal cells, head muscles and excretory gland cells.

It is found in the cell membrane. Its function is as follows. G-protein coupled receptor for tyramine, a known neurotransmitter and neuromodulator and direct precursor of octopamine. The rank order of potency is tyramine &gt; octopamine &gt; dopamine &gt; serotonin &gt; epinephrine = norepinephrine. This is Tyramine receptor Ser-2 (ser-2) from Caenorhabditis elegans.